We begin with the raw amino-acid sequence, 185 residues long: Ribosome-recycling factor (185 aa).

It belongs to the RRF family.

Its subcellular location is the cytoplasm. Its function is as follows. Responsible for the release of ribosomes from messenger RNA at the termination of protein biosynthesis. May increase the efficiency of translation by recycling ribosomes from one round of translation to another. The chain is Ribosome-recycling factor from Alcanivorax borkumensis (strain ATCC 700651 / DSM 11573 / NCIMB 13689 / SK2).